The primary structure comprises 463 residues: Probable ECA polymerase (463 aa).

11 helical membrane-spanning segments follow: residues 6–26 (FGGL…LTWM), 39–59 (FSLL…VLVF), 65–85 (VVPV…YAIY), 112–132 (ANLT…IFFL), 154–174 (GVAL…VYFL), 180–200 (AWLM…VIVG), 201–221 (GTRA…IVRG), 222–242 (WITL…MFWL), 340–360 (LVVM…GLVI), 377–397 (YKAA…IVLT), and 408–428 (VVFF…LYWL).

Belongs to the WzyE family. As to quaternary structure, probably part of a complex composed of WzxE, WzyE and WzzE.

Its subcellular location is the cell inner membrane. It functions in the pathway bacterial outer membrane biogenesis; enterobacterial common antigen biosynthesis. Probably involved in the polymerization of enterobacterial common antigen (ECA) trisaccharide repeat units. The polypeptide is Probable ECA polymerase (Pectobacterium carotovorum subsp. carotovorum (strain PC1)).